Consider the following 119-residue polypeptide: NADH-quinone oxidoreductase subunit A (119 aa).

The next 3 helical transmembrane spans lie at 7–27 (FPVLLFLVVGTGLGVALVSIG), 63–83 (LVAILFIIFDLETAFLFPWGV), and 88–108 (IGWPGFLAMMIFLLEFLLGFA).

This sequence belongs to the complex I subunit 3 family. As to quaternary structure, NDH-1 is composed of 14 different subunits. Subunits NuoA, H, J, K, L, M, N constitute the membrane sector of the complex.

The protein localises to the cell inner membrane. It catalyses the reaction a quinone + NADH + 5 H(+)(in) = a quinol + NAD(+) + 4 H(+)(out). Functionally, NDH-1 shuttles electrons from NADH, via FMN and iron-sulfur (Fe-S) centers, to quinones in the respiratory chain. The immediate electron acceptor for the enzyme in this species is believed to be ubiquinone. Couples the redox reaction to proton translocation (for every two electrons transferred, four hydrogen ions are translocated across the cytoplasmic membrane), and thus conserves the redox energy in a proton gradient. This is NADH-quinone oxidoreductase subunit A from Paraburkholderia phytofirmans (strain DSM 17436 / LMG 22146 / PsJN) (Burkholderia phytofirmans).